The following is a 351-amino-acid chain: Porphobilinogen deaminase (351 aa).

Residue cysteine 242 is modified to S-(dipyrrolylmethanemethyl)cysteine.

This sequence belongs to the HMBS family. Monomer. The cofactor is dipyrromethane.

The enzyme catalyses 4 porphobilinogen + H2O = hydroxymethylbilane + 4 NH4(+). The protein operates within porphyrin-containing compound metabolism; protoporphyrin-IX biosynthesis; coproporphyrinogen-III from 5-aminolevulinate: step 2/4. Tetrapolymerization of the monopyrrole PBG into the hydroxymethylbilane pre-uroporphyrinogen in several discrete steps. This is Porphobilinogen deaminase from Rickettsia peacockii (strain Rustic).